A 299-amino-acid polypeptide reads, in one-letter code: Probable lipid kinase YegS (299 aa).

The DAGKc domain maps to 2–133 (ANFPDSLLIL…IDMARVNDKT (132 aa)). ATP contacts are provided by residues T40, 66–72 (GDGTINE), and T95. Residues L215, D218, and L220 each coordinate Mg(2+). Residue E271 is the Proton acceptor of the active site.

This sequence belongs to the diacylglycerol/lipid kinase family. YegS lipid kinase subfamily. The cofactor is Mg(2+). Requires Ca(2+) as cofactor.

The protein resides in the cytoplasm. Functionally, probably phosphorylates lipids; the in vivo substrate is unknown. The polypeptide is Probable lipid kinase YegS (Salmonella arizonae (strain ATCC BAA-731 / CDC346-86 / RSK2980)).